A 263-amino-acid chain; its full sequence is Proliferating cell nuclear antigen (263 aa).

Residues Arg-61–Arg-80 mediate DNA binding.

It belongs to the PCNA family. In terms of assembly, homotrimer. Interacts with FEN1A. Interacts with POLL. Interacts with RAD/GEN1. Interacts with DJA7 and DJA8. In terms of tissue distribution, expressed in proliferating tissues. Expressed in roots and root apex. Expressed at low levels in young leaves. Not detected in mature leaves. Highly expressed in shoot apical meristem (SAM). Expressed in flag leaves and panicles.

The protein resides in the nucleus. Its function is as follows. This protein is an auxiliary protein of DNA polymerase delta and is involved in the control of eukaryotic DNA replication by increasing the polymerase's processibility during elongation of the leading strand. In Oryza sativa subsp. japonica (Rice), this protein is Proliferating cell nuclear antigen.